The following is a 482-amino-acid chain: NADH-quinone oxidoreductase subunit N (482 aa).

Transmembrane regions (helical) follow at residues 11–31, 37–57, 77–97, 106–126, 131–151, 166–186, 208–228, 255–275, 279–299, 304–324, 332–352, 376–396, 404–424, and 462–482; these read AVPE…GVFI, IPYY…WYIF, RFSV…FIYA, IPHT…VALV, LLTV…MVAL, FVIG…IFGA, LILV…LGTA, IAAY…LHVQ, MLIV…IVQS, MLAY…LCGT, MFYT…VVLM, AFMM…VGFI, ALIQ…AIVG, and LAVL…HLAF.

This sequence belongs to the complex I subunit 2 family. NDH-1 is composed of 14 different subunits. Subunits NuoA, H, J, K, L, M, N constitute the membrane sector of the complex.

It is found in the cell inner membrane. It carries out the reaction a quinone + NADH + 5 H(+)(in) = a quinol + NAD(+) + 4 H(+)(out). Functionally, NDH-1 shuttles electrons from NADH, via FMN and iron-sulfur (Fe-S) centers, to quinones in the respiratory chain. The immediate electron acceptor for the enzyme in this species is believed to be ubiquinone. Couples the redox reaction to proton translocation (for every two electrons transferred, four hydrogen ions are translocated across the cytoplasmic membrane), and thus conserves the redox energy in a proton gradient. This chain is NADH-quinone oxidoreductase subunit N, found in Coxiella burnetii (strain RSA 493 / Nine Mile phase I).